A 571-amino-acid polypeptide reads, in one-letter code: CDT1-like protein a, chloroplastic (571 aa).

The N-terminal 79 residues, 1 to 79 (MSTPGSSRSI…GSRRRSEDPV (79 aa)), are a transit peptide targeting the chloroplast. Disordered stretches follow at residues 1-110 (MSTP…EKEK) and 288-315 (TTSS…TPAK). Residues 22–38 (SPSSKSQTGNPNPSSVA) show a composition bias toward polar residues. Over residues 81 to 96 (SSAKSRLFFDSSSSSP) the composition is skewed to low complexity. The segment covering 288–302 (TTSSLAKPTSSQINI) has biased composition (polar residues). Low complexity predominate over residues 303-315 (APTPTKPTSTPAK).

The protein belongs to the Cdt1 family. As to quaternary structure, binds to ARC6. In terms of processing, phosphorylated by cyclin D- and cyclin A-containing CDKA-1, and thus targeted to proteasome-mediated proteolysis. As to expression, expressed in proliferating (e.g. shoot and root apical meristems, organ primordia) and endoreplicating cells (e.g. guard cells and stomatal lineage, developing trichomes).

The protein resides in the plastid. The protein localises to the chloroplast. Functionally, member of the pre-replication complex. Component of the plastid division machinery. Promotes polyloidization and regulates endoreduplication. Involved in the coordination of cell and plastid division. The polypeptide is CDT1-like protein a, chloroplastic (CDT1A) (Arabidopsis thaliana (Mouse-ear cress)).